A 351-amino-acid chain; its full sequence is Small ribosomal subunit biogenesis GTPase RsgA (351 aa).

Positions 107–277 constitute a CP-type G domain; the sequence is ENLLQRPDNF…LIDSPGIREF (171 aa). GTP contacts are provided by residues 163–166 and 219–227; these read NKTD and GQSGVGKSS. Cys301, Cys306, His308, and Cys314 together coordinate Zn(2+).

Belongs to the TRAFAC class YlqF/YawG GTPase family. RsgA subfamily. Monomer. Associates with 30S ribosomal subunit, binds 16S rRNA. Zn(2+) is required as a cofactor.

The protein resides in the cytoplasm. One of several proteins that assist in the late maturation steps of the functional core of the 30S ribosomal subunit. Helps release RbfA from mature subunits. May play a role in the assembly of ribosomal proteins into the subunit. Circularly permuted GTPase that catalyzes slow GTP hydrolysis, GTPase activity is stimulated by the 30S ribosomal subunit. The polypeptide is Small ribosomal subunit biogenesis GTPase RsgA (Marinobacter nauticus (strain ATCC 700491 / DSM 11845 / VT8) (Marinobacter aquaeolei)).